The chain runs to 241 residues: Beta-nerve growth factor (241 aa).

The signal sequence occupies residues 1 to 18 (MSMLFYTLITAFLIGVQA). Positions 19–121 (EPYTDSNVPE…SFNRTHRSKR (103 aa)) are excised as a propeptide. N-linked (GlcNAc...) asparagine glycans are attached at residues Asn69, Asn114, and Asn166. Cystine bridges form between Cys136–Cys201, Cys179–Cys229, and Cys189–Cys231. Residues Tyr173 and Lys209 each contribute to the a 1-acyl-sn-glycero-3-phospho-(1D-myo-inositol) site. Lys209 is an a 1-acyl-sn-glycero-3-phospho-L-serine binding site.

Belongs to the NGF-beta family. In terms of assembly, homodimer. The homodimer interacts with a single NTRK1 chain. The homodimer interacts with a single NGFR chain. The NGF dimer interacts with a single SORCS2 chain (via extracellular domain). The NGF precursor (proNGF) binds to a receptor complex formed by SORT1 and NGFR, which leads to NGF endocytosis. Both mature NGF and the immature NGF precursor (proNGF) interact with SORCS2 and with the heterodimer formed by SORCS2 and NGFR (via extracellular domains). The NGF precursor (proNGF) has much higher affinity for SORCS2 than mature NGF. The NGF precursor (proNGF) has much higher affinity for SORT1 than mature NGF. Interacts with ADAM10 in a divalent cation-dependent manner. Interacts with SORCS3. As to expression, detected in the granule and pyramidal cell layer in the hippocampus.

The protein localises to the secreted. It is found in the endosome lumen. Functionally, nerve growth factor is important for the development and maintenance of the sympathetic and sensory nervous systems. Extracellular ligand for the NTRK1 and NGFR receptors, activates cellular signaling cascades to regulate neuronal proliferation, differentiation and survival. The immature NGF precursor (proNGF) functions as a ligand for the heterodimeric receptor formed by SORCS2 and NGFR, and activates cellular signaling cascades that lead to inactivation of RAC1 and/or RAC2, reorganization of the actin cytoskeleton and neuronal growth cone collapse. In contrast to mature NGF, the precursor form (proNGF) promotes neuronal apoptosis (in vitro). Inhibits metalloproteinase-dependent proteolysis of platelet glycoprotein VI. Binds lysophosphatidylinositol and lysophosphatidylserine between the two chains of the homodimer. The lipid-bound form promotes histamine relase from mast cells, contrary to the lipid-free form. This is Beta-nerve growth factor (Ngf) from Rattus norvegicus (Rat).